The chain runs to 82 residues: Beta-defensin 113 (82 aa).

The first 16 residues, 1–16 (MKILCIFLTFVFTVSC), serve as a signal peptide directing secretion. 3 cysteine pairs are disulfide-bonded: Cys-35–Cys-61, Cys-42–Cys-56, and Cys-46–Cys-62.

Belongs to the beta-defensin family.

The protein resides in the secreted. Its function is as follows. Has antibacterial activity. This chain is Beta-defensin 113 (DEFB113), found in Homo sapiens (Human).